The following is a 575-amino-acid chain: Carboxylesterase 5A (575 aa).

Positions 1 to 27 (MSGEWGHLGQTLIWAVWVLAAATEGPA) are cleaved as a signal peptide. Residue Asn82 is glycosylated (N-linked (GlcNAc...) asparagine). An intrachain disulfide couples Cys94 to Cys121. The Acyl-ester intermediate role is filled by Ser226. A disulfide bridge connects residues Cys280 and Cys291. N-linked (GlcNAc...) asparagine glycosylation occurs at Asn281. The Charge relay system role is filled by Glu345. An N-linked (GlcNAc...) asparagine glycan is attached at Asn363. His454 serves as the catalytic Charge relay system. The N-linked (GlcNAc...) asparagine glycan is linked to Asn524.

The protein belongs to the type-B carboxylesterase/lipase family. In terms of processing, N-glycosylated.

The protein resides in the secreted. The enzyme catalyses a carboxylic ester + H2O = an alcohol + a carboxylate + H(+). Functionally, involved in the detoxification of xenobiotics and in the activation of ester and amide prodrugs. The protein is Carboxylesterase 5A (CES5A) of Canis lupus familiaris (Dog).